A 1219-amino-acid chain; its full sequence is NHS-like protein 2 (1219 aa).

Disordered stretches follow at residues Phe162–Lys181, Phe288–Pro321, Phe336–Pro364, Thr400–Trp423, Gly474–Leu591, Gln669–Val741, Gly854–Ser938, Ile979–Ser1003, Leu1033–Ala1087, and Trp1121–Asn1197. Polar residues predominate over residues Phe288–Ser312. Basic and acidic residues predominate over residues Gly352–Pro364. Ser499 bears the Phosphoserine mark. The span at Ala526–Glu545 shows a compositional bias: polar residues. Positions Arg549–Pro567 are enriched in basic residues. Position 575 is a phosphoserine (Ser575). Over residues Ser674–Ser687 the composition is skewed to low complexity. The residue at position 690 (Ser690) is a Phosphoserine. 2 stretches are compositionally biased toward polar residues: residues Met708–Leu729 and Thr897–Ser908. Position 1048 is a phosphoserine (Ser1048). Over residues Ala1076–Ala1087 the composition is skewed to basic and acidic residues. Positions Ser1131–Asp1144 are enriched in polar residues. Low complexity predominate over residues Ser1145–Ala1160. Phosphoserine is present on Ser1208.

It belongs to the NHS family.

This Mus musculus (Mouse) protein is NHS-like protein 2.